The sequence spans 299 residues: ATP phosphoribosyltransferase (299 aa).

It belongs to the ATP phosphoribosyltransferase family. Long subfamily. It depends on Mg(2+) as a cofactor.

The protein localises to the cytoplasm. The catalysed reaction is 1-(5-phospho-beta-D-ribosyl)-ATP + diphosphate = 5-phospho-alpha-D-ribose 1-diphosphate + ATP. The protein operates within amino-acid biosynthesis; L-histidine biosynthesis; L-histidine from 5-phospho-alpha-D-ribose 1-diphosphate: step 1/9. Feedback inhibited by histidine. Functionally, catalyzes the condensation of ATP and 5-phosphoribose 1-diphosphate to form N'-(5'-phosphoribosyl)-ATP (PR-ATP). Has a crucial role in the pathway because the rate of histidine biosynthesis seems to be controlled primarily by regulation of HisG enzymatic activity. This chain is ATP phosphoribosyltransferase, found in Campylobacter jejuni subsp. jejuni serotype O:2 (strain ATCC 700819 / NCTC 11168).